The sequence spans 459 residues: uncharacterized protein (459 aa).

Residues 13–145 (TESAIKRVVG…DALSKGRELK (133 aa)) form the B12-binding domain. Residues 188 to 402 (ADGVPFGVVM…MNWRKYTTID (215 aa)) enclose the Radical SAM core domain. [4Fe-4S] cluster-binding residues include Cys202, Cys206, and Cys209.

It belongs to the methyltransferase superfamily. It depends on [4Fe-4S] cluster as a cofactor.

This is an uncharacterized protein from Pyrococcus horikoshii (strain ATCC 700860 / DSM 12428 / JCM 9974 / NBRC 100139 / OT-3).